Consider the following 363-residue polypeptide: Aminomethyltransferase (363 aa).

This sequence belongs to the GcvT family. The glycine cleavage system is composed of four proteins: P, T, L and H.

It carries out the reaction N(6)-[(R)-S(8)-aminomethyldihydrolipoyl]-L-lysyl-[protein] + (6S)-5,6,7,8-tetrahydrofolate = N(6)-[(R)-dihydrolipoyl]-L-lysyl-[protein] + (6R)-5,10-methylene-5,6,7,8-tetrahydrofolate + NH4(+). In terms of biological role, the glycine cleavage system catalyzes the degradation of glycine. The polypeptide is Aminomethyltransferase (Picosynechococcus sp. (strain ATCC 27264 / PCC 7002 / PR-6) (Agmenellum quadruplicatum)).